Reading from the N-terminus, the 187-residue chain is MAIAESFQLSDGYSVYAGVRARRDGVVEDAAFALAKIGGTDGTSAASKILEALLRRDVSLVMLDGCIVSFYNWVDGEALYAKFKKPVACYVFEEPEGRVEEAVRKLFTDWEVRIEAIKKLGPPTVYYTKSGYKIYIRAWGIDPVDAGRAAEYCTGFGKIPEPLRVAKIIAGAARQFLKTLGKFRFLW.

The protein belongs to the UPF0215 family.

This Pyrobaculum aerophilum (strain ATCC 51768 / DSM 7523 / JCM 9630 / CIP 104966 / NBRC 100827 / IM2) protein is UPF0215 protein PAE0952.